Reading from the N-terminus, the 250-residue chain is GTP cyclohydrolase 1 type 2 homolog (250 aa).

A divalent metal cation-binding residues include H63, H64, D100, H218, and E222.

This sequence belongs to the GTP cyclohydrolase I type 2/NIF3 family. Homohexamer.

The chain is GTP cyclohydrolase 1 type 2 homolog from Pyrococcus horikoshii (strain ATCC 700860 / DSM 12428 / JCM 9974 / NBRC 100139 / OT-3).